The primary structure comprises 918 residues: Protein translocase subunit SecA (918 aa).

Residues Gln87, 105 to 109 (GEGKT), and Asp500 contribute to the ATP site. The tract at residues 876–918 (AGALPVAETLERDTPESWRNTPRNAPCPCGSGKKYKHCHGQAR) is disordered. Positions 902, 904, 913, and 914 each coordinate Zn(2+). Basic residues predominate over residues 908-918 (KKYKHCHGQAR).

The protein belongs to the SecA family. In terms of assembly, monomer and homodimer. Part of the essential Sec protein translocation apparatus which comprises SecA, SecYEG and auxiliary proteins SecDF-YajC and YidC. The cofactor is Zn(2+).

It localises to the cell inner membrane. The protein resides in the cytoplasm. The enzyme catalyses ATP + H2O + cellular proteinSide 1 = ADP + phosphate + cellular proteinSide 2.. In terms of biological role, part of the Sec protein translocase complex. Interacts with the SecYEG preprotein conducting channel. Has a central role in coupling the hydrolysis of ATP to the transfer of proteins into and across the cell membrane, serving both as a receptor for the preprotein-SecB complex and as an ATP-driven molecular motor driving the stepwise translocation of polypeptide chains across the membrane. In Rhodospirillum centenum (strain ATCC 51521 / SW), this protein is Protein translocase subunit SecA.